A 299-amino-acid chain; its full sequence is Probable plastid-lipid-associated protein 13, chloroplastic (299 aa).

The transit peptide at Met-1–Arg-48 directs the protein to the chloroplast. Ala-2 carries the N-acetylvaline modification.

Belongs to the PAP/fibrillin family.

The protein resides in the plastid. Its subcellular location is the chloroplast. It localises to the plastoglobule. The sequence is that of Probable plastid-lipid-associated protein 13, chloroplastic (PAP13) from Arabidopsis thaliana (Mouse-ear cress).